A 453-amino-acid chain; its full sequence is tRNA (guanine-N(7)-)-methyltransferase non-catalytic subunit TRM82 (453 aa).

The interval 69–99 is disordered; the sequence is ENEEKGIKKSKTNEGNTIEKKHDAKIPVPGP. WD repeat units lie at residues 103-143 and 244-286; these read PIYS…NDNC and GHKE…DEFD.

The protein belongs to the WD repeat TRM82 family. In terms of assembly, forms a heterodimer with the catalytic subunit TRM8.

The protein localises to the nucleus. Its pathway is tRNA modification; N(7)-methylguanine-tRNA biosynthesis. Required for the formation of N(7)-methylguanine at position 46 (m7G46) in tRNA. In the complex, it is required to stabilize and induce conformational changes of the catalytic subunit. In Vanderwaltozyma polyspora (strain ATCC 22028 / DSM 70294 / BCRC 21397 / CBS 2163 / NBRC 10782 / NRRL Y-8283 / UCD 57-17) (Kluyveromyces polysporus), this protein is tRNA (guanine-N(7)-)-methyltransferase non-catalytic subunit TRM82.